The following is a 396-amino-acid chain: Acetyl-CoA acetyltransferase (396 aa).

The active-site Acyl-thioester intermediate is Cys89. CoA-binding positions include 223–225 (RKS) and Ser249. Residues His352 and Cys382 each act as proton acceptor in the active site.

The protein belongs to the thiolase-like superfamily. Thiolase family.

It is found in the cytoplasm. It carries out the reaction 2 acetyl-CoA = acetoacetyl-CoA + CoA. It participates in lipid metabolism; butanoate metabolism. Functionally, involved in syntrophic growth of S.wolfei with butyrate, as part of the butyrate oxidation pathway. Probably catalyzes the beta-keto thiolysis of acetoacetyl-CoA, leading to 2 acetyl-CoA molecules. The polypeptide is Acetyl-CoA acetyltransferase (Syntrophomonas wolfei subsp. wolfei (strain DSM 2245B / Goettingen)).